The primary structure comprises 365 residues: Peptide chain release factor 1 (365 aa).

Residue Gln240 is modified to N5-methylglutamine.

Belongs to the prokaryotic/mitochondrial release factor family. Post-translationally, methylated by PrmC. Methylation increases the termination efficiency of RF1.

The protein resides in the cytoplasm. Functionally, peptide chain release factor 1 directs the termination of translation in response to the peptide chain termination codons UAG and UAA. In Bifidobacterium animalis subsp. lactis (strain AD011), this protein is Peptide chain release factor 1.